Consider the following 333-residue polypeptide: Tetraacyldisaccharide 4'-kinase (333 aa).

57–64 (IVGGAGKT) contacts ATP.

Belongs to the LpxK family.

The catalysed reaction is a lipid A disaccharide + ATP = a lipid IVA + ADP + H(+). Its pathway is glycolipid biosynthesis; lipid IV(A) biosynthesis; lipid IV(A) from (3R)-3-hydroxytetradecanoyl-[acyl-carrier-protein] and UDP-N-acetyl-alpha-D-glucosamine: step 6/6. Functionally, transfers the gamma-phosphate of ATP to the 4'-position of a tetraacyldisaccharide 1-phosphate intermediate (termed DS-1-P) to form tetraacyldisaccharide 1,4'-bis-phosphate (lipid IVA). This is Tetraacyldisaccharide 4'-kinase from Dechloromonas aromatica (strain RCB).